The chain runs to 114 residues: Large ribosomal subunit protein uL22 (114 aa).

Belongs to the universal ribosomal protein uL22 family. As to quaternary structure, part of the 50S ribosomal subunit.

This protein binds specifically to 23S rRNA; its binding is stimulated by other ribosomal proteins, e.g. L4, L17, and L20. It is important during the early stages of 50S assembly. It makes multiple contacts with different domains of the 23S rRNA in the assembled 50S subunit and ribosome. Functionally, the globular domain of the protein is located near the polypeptide exit tunnel on the outside of the subunit, while an extended beta-hairpin is found that lines the wall of the exit tunnel in the center of the 70S ribosome. The polypeptide is Large ribosomal subunit protein uL22 (Streptococcus mutans serotype c (strain ATCC 700610 / UA159)).